Consider the following 202-residue polypeptide: Small ribosomal subunit protein uS4c (202 aa).

Positions 90-153 (MRLDNVIFRL…KSETIISKNI (64 aa)) constitute an S4 RNA-binding domain.

Belongs to the universal ribosomal protein uS4 family. In terms of assembly, part of the 30S ribosomal subunit. Contacts protein S5. The interaction surface between S4 and S5 is involved in control of translational fidelity.

It is found in the plastid. The protein resides in the chloroplast. Its function is as follows. One of the primary rRNA binding proteins, it binds directly to 16S rRNA where it nucleates assembly of the body of the 30S subunit. With S5 and S12 plays an important role in translational accuracy. The chain is Small ribosomal subunit protein uS4c (rps4) from Arbusculohypopterygium arbuscula (Moss).